Consider the following 234-residue polypeptide: Sugar fermentation stimulation protein homolog (234 aa).

This sequence belongs to the SfsA family.

This Citrobacter koseri (strain ATCC BAA-895 / CDC 4225-83 / SGSC4696) protein is Sugar fermentation stimulation protein homolog.